The following is a 74-amino-acid chain: Protein kish-B (74 aa).

The signal sequence occupies residues 1-22; sequence MTNVYSLDGILVFGLLFVCTCA. The Extracellular segment spans residues 23-52; sequence YFKKVPRLKTWLLSEKKGVWGVFYKAAVIG. A helical membrane pass occupies residues 53-73; sequence TRLHAAVAIACIVMAFYVLFI. A topological domain (cytoplasmic) is located at residue Lys-74.

The protein belongs to the KISH family.

The protein resides in the golgi apparatus membrane. In terms of biological role, involved in the early part of the secretory pathway. The polypeptide is Protein kish-B (TMEM167B) (Bos taurus (Bovine)).